We begin with the raw amino-acid sequence, 86 residues long: Small ribosomal subunit protein uS17 (86 aa).

Belongs to the universal ribosomal protein uS17 family. As to quaternary structure, part of the 30S ribosomal subunit.

One of the primary rRNA binding proteins, it binds specifically to the 5'-end of 16S ribosomal RNA. The polypeptide is Small ribosomal subunit protein uS17 (Caldicellulosiruptor bescii (strain ATCC BAA-1888 / DSM 6725 / KCTC 15123 / Z-1320) (Anaerocellum thermophilum)).